A 143-amino-acid polypeptide reads, in one-letter code: Large ribosomal subunit protein uL13 (143 aa).

This sequence belongs to the universal ribosomal protein uL13 family. Part of the 50S ribosomal subunit.

Functionally, this protein is one of the early assembly proteins of the 50S ribosomal subunit, although it is not seen to bind rRNA by itself. It is important during the early stages of 50S assembly. The polypeptide is Large ribosomal subunit protein uL13 (Dehalococcoides mccartyi (strain ATCC BAA-2266 / KCTC 15142 / 195) (Dehalococcoides ethenogenes (strain 195))).